The primary structure comprises 108 residues: Type III secretion system chaperone SseA (108 aa).

The stretch at asparagine 69–alanine 97 forms a coiled coil.

In terms of assembly, binds to SseB and SseD.

It localises to the cytoplasm. Its function is as follows. Functions as a type III secretion system (T3SS) chaperone, which is required for SseB and SseD accumulation and secretion. May have a direct role in secretion of SseB and SseD, or may facilitate their correct folding, for efficient secretion and function. Required for survival and replication within epithelial cells and macrophages. The sequence is that of Type III secretion system chaperone SseA (sseA) from Salmonella typhimurium (strain LT2 / SGSC1412 / ATCC 700720).